The chain runs to 135 residues: Fluoride-specific ion channel FluC 2 (135 aa).

Helical transmembrane passes span 5–25, 36–56, 68–88, and 100–120; these read VLAA…GLLA, WGTV…METL, PFLG…ITDA, and ALLA…AAAG. Na(+)-binding residues include Gly76 and Thr79.

The protein belongs to the fluoride channel Fluc/FEX (TC 1.A.43) family.

The protein resides in the cell membrane. The enzyme catalyses fluoride(in) = fluoride(out). With respect to regulation, na(+) is not transported, but it plays an essential structural role and its presence is essential for fluoride channel function. Fluoride-specific ion channel. Important for reducing fluoride concentration in the cell, thus reducing its toxicity. The sequence is that of Fluoride-specific ion channel FluC 2 from Thermobifida fusca (strain YX).